Here is a 541-residue protein sequence, read N- to C-terminus: 2-isopropylmalate synthase (541 aa).

A Pyruvate carboxyltransferase domain is found at 8–284 (VIIFDTTLRD…LTNINTRHIY (277 aa)). Mn(2+)-binding residues include aspartate 17, histidine 208, histidine 210, and asparagine 244. The tract at residues 408–541 (RLELVQVSCG…DQPTEVVAGS (134 aa)) is regulatory domain.

The protein belongs to the alpha-IPM synthase/homocitrate synthase family. LeuA type 1 subfamily. As to quaternary structure, homodimer. Requires Mn(2+) as cofactor.

The protein resides in the cytoplasm. It carries out the reaction 3-methyl-2-oxobutanoate + acetyl-CoA + H2O = (2S)-2-isopropylmalate + CoA + H(+). It participates in amino-acid biosynthesis; L-leucine biosynthesis; L-leucine from 3-methyl-2-oxobutanoate: step 1/4. In terms of biological role, catalyzes the condensation of the acetyl group of acetyl-CoA with 3-methyl-2-oxobutanoate (2-ketoisovalerate) to form 3-carboxy-3-hydroxy-4-methylpentanoate (2-isopropylmalate). This chain is 2-isopropylmalate synthase, found in Trichodesmium erythraeum (strain IMS101).